The chain runs to 145 residues: D-aminoacyl-tRNA deacylase (145 aa).

The Gly-cisPro motif, important for rejection of L-amino acids signature appears at 137 to 138 (GP).

Belongs to the DTD family. In terms of assembly, homodimer.

It is found in the cytoplasm. It catalyses the reaction glycyl-tRNA(Ala) + H2O = tRNA(Ala) + glycine + H(+). The enzyme catalyses a D-aminoacyl-tRNA + H2O = a tRNA + a D-alpha-amino acid + H(+). Its function is as follows. An aminoacyl-tRNA editing enzyme that deacylates mischarged D-aminoacyl-tRNAs. Also deacylates mischarged glycyl-tRNA(Ala), protecting cells against glycine mischarging by AlaRS. Acts via tRNA-based rather than protein-based catalysis; rejects L-amino acids rather than detecting D-amino acids in the active site. By recycling D-aminoacyl-tRNA to D-amino acids and free tRNA molecules, this enzyme counteracts the toxicity associated with the formation of D-aminoacyl-tRNA entities in vivo and helps enforce protein L-homochirality. The polypeptide is D-aminoacyl-tRNA deacylase (Alcanivorax borkumensis (strain ATCC 700651 / DSM 11573 / NCIMB 13689 / SK2)).